Consider the following 198-residue polypeptide: Prostamide/prostaglandin F synthase (198 aa).

At Y108 the chain carries Phosphotyrosine.

The protein belongs to the peroxiredoxin-like PRXL2 family. Prostamide/prostaglandin F synthase subfamily.

Its subcellular location is the cytoplasm. The protein localises to the cytosol. The catalysed reaction is prostaglandin H2 + [thioredoxin]-dithiol = prostaglandin F2alpha + [thioredoxin]-disulfide. The enzyme catalyses prostamide F2alpha + [thioredoxin]-disulfide = prostamide H2 + [thioredoxin]-dithiol. Functionally, catalyzes the reduction of prostaglandin-ethanolamide H(2) (prostamide H(2)) to prostamide F(2alpha) with NADPH as proton donor. Also able to reduce prostaglandin H(2) to prostaglandin F(2alpha). This chain is Prostamide/prostaglandin F synthase, found in Homo sapiens (Human).